Reading from the N-terminus, the 89-residue chain is Small ribosomal subunit protein uS14 (89 aa).

Belongs to the universal ribosomal protein uS14 family. Part of the 30S ribosomal subunit. Contacts proteins S3 and S10.

Binds 16S rRNA, required for the assembly of 30S particles and may also be responsible for determining the conformation of the 16S rRNA at the A site. The polypeptide is Small ribosomal subunit protein uS14 (Deinococcus radiodurans (strain ATCC 13939 / DSM 20539 / JCM 16871 / CCUG 27074 / LMG 4051 / NBRC 15346 / NCIMB 9279 / VKM B-1422 / R1)).